The chain runs to 41 residues: Peroxidase 3 (41 aa).

This sequence belongs to the peroxidase family. Classical plant (class III) peroxidase subfamily. Heme b serves as cofactor. The cofactor is Ca(2+).

It localises to the secreted. It catalyses the reaction 2 a phenolic donor + H2O2 = 2 a phenolic radical donor + 2 H2O. Functionally, removal of H(2)O(2), oxidation of toxic reductants, biosynthesis and degradation of lignin, suberization, auxin catabolism, response to environmental stresses such as wounding, pathogen attack and oxidative stress. These functions might be dependent on each isozyme/isoform in each plant tissue. The chain is Peroxidase 3 from Vitis vinifera (Grape).